The chain runs to 513 residues: Zinc finger CCCH-type with G patch domain-containing protein (513 aa).

A C3H1-type zinc finger spans residues 155–178 (PCSYYLEGECRFDETKCRFSHGAL). Acidic residues-rich tracts occupy residues 252 to 261 (DQDEDDELSS) and 271 to 283 (DSSD…MDDL). Positions 252-283 (DQDEDDELSSEESNSSMNDDSSDEAESDMDDL) are disordered. Residues 312–358 (TRGIGSKLMEKMGYIHGTGLGSDGRGIVTPVSAQILPQGRSLDACME) form the G-patch domain. Basic and acidic residues predominate over residues 455–467 (DMAKVKQSLDRNS). Residues 455–513 (DMAKVKQSLDRNSGDAQLQKRLQVQMESHKQELATLQAQERSLSKEQQTRKSKNKMFEF) are disordered. Residues 468 to 480 (GDAQLQKRLQVQM) show a composition bias toward polar residues. Positions 496 to 513 (SLSKEQQTRKSKNKMFEF) are enriched in basic and acidic residues.

The protein resides in the nucleus. Functionally, transcription repressor. The polypeptide is Zinc finger CCCH-type with G patch domain-containing protein (Drosophila yakuba (Fruit fly)).